We begin with the raw amino-acid sequence, 259 residues long: Ribonuclease HII (259 aa).

An RNase H type-2 domain is found at Ser72–Leu259. A divalent metal cation contacts are provided by Asp78, Glu79, and Asp170.

Belongs to the RNase HII family. Mn(2+) serves as cofactor. It depends on Mg(2+) as a cofactor.

Its subcellular location is the cytoplasm. The enzyme catalyses Endonucleolytic cleavage to 5'-phosphomonoester.. In terms of biological role, endonuclease that specifically degrades the RNA of RNA-DNA hybrids. This is Ribonuclease HII from Bacillus cytotoxicus (strain DSM 22905 / CIP 110041 / 391-98 / NVH 391-98).